We begin with the raw amino-acid sequence, 140 residues long: MSKRGRGGSSGAKFRISLGLPVGAVINCADNTGAKNLYIISVKGIKGRLNRLPAAGVGDMVMATVKKGKPXLRKKVHPAVVIRQRKSYRRKDGVFLYFEDNAGVIVNNKGEMKGSAITGPVXKECADLWPXIASNAGSIA.

The residue at position 17 (Ser17) is a Phosphoserine. Tyr38 carries the phosphotyrosine modification.

It belongs to the universal ribosomal protein uL14 family. As to quaternary structure, component of the large ribosomal subunit.

The protein resides in the cytoplasm. In terms of biological role, component of the large ribosomal subunit. The ribosome is a large ribonucleoprotein complex responsible for the synthesis of proteins in the cell. This chain is Large ribosomal subunit protein uL14 (RPL23), found in Canis lupus familiaris (Dog).